A 278-amino-acid chain; its full sequence is Achaete-scute homolog 5 (278 aa).

The tract at residues 1–66 (MPMGAAERGA…GPFGGGLALG (66 aa)) is disordered. The region spanning 155 to 207 (AFIQKRNERERQRVKCVNEGYARLRGHLPGALAEKRLSKVETLRAAIRYIKYL) is the bHLH domain. The tract at residues 214-278 (APDGSTPPAS…PFLESEESWH (65 aa)) is disordered. A compositionally biased stretch (pro residues) spans 230 to 239 (GPCPAPPATP). The span at 240–249 (RPDRPGDGEA) shows a compositional bias: basic and acidic residues. Residues 252 to 271 (PSSLVPESSESSCFSPSPFL) show a composition bias toward low complexity.

In terms of assembly, interacts with transcription factor TCF3/E12.

The protein resides in the nucleus. Its function is as follows. Transcription factor. Probably binds E-box motifs 5'-CANNTG-3' in complex with transcription factor TCF3/E12. Negatively modulates transcription of target genes such as CDH1/E-cadherin, perhaps by recruiting the PRC2 repressive complex to regulatory elements. Regulates ameloblast development and tooth germ growth, perhaps acting by positively modulating migration of inner enamel epithelium (IEE) cells. Plays a role in enamel formation. In Homo sapiens (Human), this protein is Achaete-scute homolog 5 (ASCL5).